We begin with the raw amino-acid sequence, 802 residues long: Bifunctional purine biosynthetic protein ADE5,7 (802 aa).

Positions 1–450 (MLNILVLGNG…QNSESSKVAI (450 aa)) are GARS. The ATP-grasp domain occupies 114–330 (KRFMSKHNIP…LAQVFLAAAE (217 aa)). 141–203 (QAHTDKAFVI…EQFLEGDEIS (63 aa)) provides a ligand contact to ATP. Positions 298 and 300 each coordinate Mg(2+). The tract at residues 451-802 (TYADSGVSVD…CVIENGTKLY (352 aa)) is AIRS. 2 positions are modified to phosphoserine: S455 and S458.

In the N-terminal section; belongs to the GARS family. It in the C-terminal section; belongs to the AIR synthase family. The cofactor is Mg(2+). Requires Mn(2+) as cofactor.

The protein localises to the cytoplasm. The catalysed reaction is 5-phospho-beta-D-ribosylamine + glycine + ATP = N(1)-(5-phospho-beta-D-ribosyl)glycinamide + ADP + phosphate + H(+). It catalyses the reaction 2-formamido-N(1)-(5-O-phospho-beta-D-ribosyl)acetamidine + ATP = 5-amino-1-(5-phospho-beta-D-ribosyl)imidazole + ADP + phosphate + H(+). The protein operates within purine metabolism; IMP biosynthesis via de novo pathway; 5-amino-1-(5-phospho-D-ribosyl)imidazole from N(2)-formyl-N(1)-(5-phospho-D-ribosyl)glycinamide: step 2/2. It functions in the pathway purine metabolism; IMP biosynthesis via de novo pathway; N(1)-(5-phospho-D-ribosyl)glycinamide from 5-phospho-alpha-D-ribose 1-diphosphate: step 2/2. Functionally, catalyzes the second and fifth step in the 'de novo' purine biosynthesis pathway; contains phosphoribosylamine--glycine ligase (GARS) and phosphoribosylformylglycinamidine cyclo-ligase (AIRS) activities. This chain is Bifunctional purine biosynthetic protein ADE5,7, found in Saccharomyces cerevisiae (strain ATCC 204508 / S288c) (Baker's yeast).